The following is a 292-amino-acid chain: Nitrogenase iron protein (292 aa).

10 to 17 is a binding site for ATP; sequence GKGGIGKS. Cys-98 contributes to the [4Fe-4S] cluster binding site. Arg-101 carries the ADP-ribosylarginine; by dinitrogenase reductase ADP-ribosyltransferase modification. Position 133 (Cys-133) interacts with [4Fe-4S] cluster.

Belongs to the NifH/BchL/ChlL family. In terms of assembly, homodimer. [4Fe-4S] cluster serves as cofactor. The reversible ADP-ribosylation of Arg-101 inactivates the nitrogenase reductase and regulates nitrogenase activity.

It carries out the reaction N2 + 8 reduced [2Fe-2S]-[ferredoxin] + 16 ATP + 16 H2O = H2 + 8 oxidized [2Fe-2S]-[ferredoxin] + 2 NH4(+) + 16 ADP + 16 phosphate + 6 H(+). Functionally, the key enzymatic reactions in nitrogen fixation are catalyzed by the nitrogenase complex, which has 2 components: the iron protein and the molybdenum-iron protein. The sequence is that of Nitrogenase iron protein from Teredinibacter turnerae (strain ATCC 39867 / T7901).